The sequence spans 89 residues: Small ribosomal subunit protein uS15 (89 aa).

It belongs to the universal ribosomal protein uS15 family. As to quaternary structure, part of the 30S ribosomal subunit. Forms a bridge to the 50S subunit in the 70S ribosome, contacting the 23S rRNA.

Its function is as follows. One of the primary rRNA binding proteins, it binds directly to 16S rRNA where it helps nucleate assembly of the platform of the 30S subunit by binding and bridging several RNA helices of the 16S rRNA. Forms an intersubunit bridge (bridge B4) with the 23S rRNA of the 50S subunit in the ribosome. The polypeptide is Small ribosomal subunit protein uS15 (Bartonella bacilliformis (strain ATCC 35685 / KC583 / Herrer 020/F12,63)).